Reading from the N-terminus, the 321-residue chain is Putative pyridoxal kinase (321 aa).

Positions 23 and 144 each coordinate substrate. ATP-binding positions include 203–204 (TS) and 230–242 (TFPR…VGTG). Asp243 provides a ligand contact to substrate.

The protein belongs to the pyridoxine kinase family. It depends on Zn(2+) as a cofactor. Mg(2+) serves as cofactor.

It catalyses the reaction pyridoxal + ATP = pyridoxal 5'-phosphate + ADP + H(+). In terms of biological role, required for synthesis of pyridoxal-5-phosphate from vitamin B6. The chain is Putative pyridoxal kinase from Caenorhabditis elegans.